Reading from the N-terminus, the 119-residue chain is Large ribosomal subunit protein bL20 (119 aa).

It belongs to the bacterial ribosomal protein bL20 family.

Its function is as follows. Binds directly to 23S ribosomal RNA and is necessary for the in vitro assembly process of the 50S ribosomal subunit. It is not involved in the protein synthesizing functions of that subunit. This Streptococcus agalactiae serotype Ia (strain ATCC 27591 / A909 / CDC SS700) protein is Large ribosomal subunit protein bL20.